The chain runs to 380 residues: Cytochrome b (380 aa).

4 helical membrane-spanning segments follow: residues 33 to 53 (FGSLLGLCLIIQILTGLFLAM), 77 to 98 (WLIRYMHANGASMFFICLFLHV), 113 to 133 (WNMGIVLLFAVMATAFMGYVL), and 178 to 198 (FFAFHFILPFIITALVLVHLL). 2 residues coordinate heme b: His83 and His97. Heme b is bound by residues His182 and His196. Position 201 (His201) interacts with a ubiquinone. 4 consecutive transmembrane segments (helical) span residues 226–246 (IKDFLGVLILLMAFMILTLFF), 288–308 (LGGVLALILSIVILAFMPLLH), 320–340 (ITQTMYWILVADLLVLTWIGG), and 347–367 (FIIIGQTASIAYFAIIVILMP).

Belongs to the cytochrome b family. In terms of assembly, the cytochrome bc1 complex contains 11 subunits: 3 respiratory subunits (MT-CYB, CYC1 and UQCRFS1), 2 core proteins (UQCRC1 and UQCRC2) and 6 low-molecular weight proteins (UQCRH/QCR6, UQCRB/QCR7, UQCRQ/QCR8, UQCR10/QCR9, UQCR11/QCR10 and a cleavage product of UQCRFS1). This cytochrome bc1 complex then forms a dimer. The cofactor is heme b.

It localises to the mitochondrion inner membrane. Functionally, component of the ubiquinol-cytochrome c reductase complex (complex III or cytochrome b-c1 complex) that is part of the mitochondrial respiratory chain. The b-c1 complex mediates electron transfer from ubiquinol to cytochrome c. Contributes to the generation of a proton gradient across the mitochondrial membrane that is then used for ATP synthesis. This chain is Cytochrome b (MT-CYB), found in Microtus guentheri (Gunther's vole).